Consider the following 201-residue polypeptide: Bradykinin potentiating and C-type natriuretic peptides (201 aa).

Positions 1–23 (MFVSRLAASGLLLLALLAVSLDG) are cleaved as a signal peptide. Positions 24 to 47 (KPVQQWSQNWPGPKVPPLVVQQWS) are excised as a propeptide. The residue at position 48 (Gln-48) is a Pyrrolidone carboxylic acid. Residues 58–60 (LVV) constitute a propeptide that is removed on maturation. A Pyrrolidone carboxylic acid modification is found at Gln-61. Propeptides lie at residues 67–95 (TQLQPRESPAGGTTALREELSLGPDAALD) and 107–179 (GSKA…LAKK). A disordered region spans residues 90 to 172 (PDAALDTPPA…GGGGGGGARR (83 aa)). The segment covering 120 to 130 (SKGASATSTAS) has biased composition (low complexity). Positions 132-142 (PMRDLRTDGKQ) are enriched in basic and acidic residues. Positions 159–170 (PGGGGGGGGGGA) are enriched in gly residues. Cys-185 and Cys-201 are oxidised to a cystine.

It in the N-terminal section; belongs to the bradykinin-potentiating peptide family. The protein in the central section; belongs to the bradykinin inhibitor peptide family. This sequence in the C-terminal section; belongs to the natriuretic peptide family. In terms of tissue distribution, venom gland.

Its subcellular location is the secreted. Inhibits the activity of the angiotensin-converting enzyme (ACE) by a preferential interaction with its C-domain. May also potentiate the hypotensive effects of bradykinin. Functionally, antagonizes the vasodilatory actions of bradykinin at the B2 bradykinin receptor. In terms of biological role, has a vasorelaxant activity in rat aortic strips and a diuretic potency in anesthetized rats. May act by activating natriuretic receptors (NPR1 and/or NPR2). This chain is Bradykinin potentiating and C-type natriuretic peptides, found in Sistrurus catenatus edwardsii (Desert massasauga).